We begin with the raw amino-acid sequence, 168 residues long: GTP-dependent dephospho-CoA kinase (168 aa).

GTP is bound by residues Asp-49, Val-50, Val-51, Asp-68, Lys-70, and Glu-120.

The protein belongs to the GTP-dependent DPCK family.

It carries out the reaction 3'-dephospho-CoA + GTP = GDP + CoA + H(+). It functions in the pathway cofactor biosynthesis; coenzyme A biosynthesis. Catalyzes the GTP-dependent phosphorylation of the 3'-hydroxyl group of dephosphocoenzyme A to form coenzyme A (CoA). The protein is GTP-dependent dephospho-CoA kinase of Pyrobaculum calidifontis (strain DSM 21063 / JCM 11548 / VA1).